The following is a 612-amino-acid chain: Anaerobic magnesium-protoporphyrin IX monomethyl ester cyclase (612 aa).

The 135-residue stretch at 9–143 (NYHSGGAEIA…KAYEADNFAE (135 aa)) folds into the B12-binding domain. The Radical SAM core domain maps to 190–417 (PLGVRVAIPN…MKPKALTRGE (228 aa)). [4Fe-4S] cluster contacts are provided by Cys-204, Cys-208, and Cys-211.

It belongs to the BchE family. It depends on [4Fe-4S] cluster as a cofactor. Adenosylcob(III)alamin is required as a cofactor.

It carries out the reaction Mg-protoporphyrin IX 13-monomethyl ester + 3 S-adenosyl-L-methionine + H2O = 3,8-divinyl protochlorophyllide a + 3 5'-deoxyadenosine + 3 L-methionine + 4 H(+). It functions in the pathway porphyrin-containing compound metabolism; bacteriochlorophyll biosynthesis (light-independent). Its function is as follows. Involved in the tetrapyrrole biosynthetic pathways leading to chlorophyll and bacteriochlorophyll (BChl). Catalyzes the anaerobic formation of the isocyclic ring (E-ring) in Mg-protoporphyrin monomethyl ester (MPE) to yield protochlorophyllide a (PChlide a) via a six-electron oxidation and the formation of an oxo group at position C13 using oxygen from a water molecule. The polypeptide is Anaerobic magnesium-protoporphyrin IX monomethyl ester cyclase (Cereibacter sphaeroides (strain ATCC 17023 / DSM 158 / JCM 6121 / CCUG 31486 / LMG 2827 / NBRC 12203 / NCIMB 8253 / ATH 2.4.1.) (Rhodobacter sphaeroides)).